A 67-amino-acid polypeptide reads, in one-letter code: MIFPMQQLIEFQGNIYEITCAATRRAFQLAAVCDPVLDELGGKVVSAAAQQVFSGTVDYRIEPQELG.

It belongs to the RNA polymerase subunit omega family. The RNAP catalytic core consists of 2 alpha, 1 beta, 1 beta' and 1 omega subunit. When a sigma factor is associated with the core the holoenzyme is formed, which can initiate transcription.

It carries out the reaction RNA(n) + a ribonucleoside 5'-triphosphate = RNA(n+1) + diphosphate. Promotes RNA polymerase assembly. Latches the N- and C-terminal regions of the beta' subunit thereby facilitating its interaction with the beta and alpha subunits. This Treponema pallidum (strain Nichols) protein is DNA-directed RNA polymerase subunit omega (rpoZ).